The sequence spans 312 residues: Glycerol-3-phosphate dehydrogenase [NAD(P)+] (312 aa).

Residues Trp-11, Arg-30, Arg-31, and Lys-95 each contribute to the NADPH site. Sn-glycerol 3-phosphate is bound by residues Lys-95, Gly-123, and Ser-125. Ala-127 contributes to the NADPH binding site. The sn-glycerol 3-phosphate site is built by Lys-177, Asp-230, Ser-240, Arg-241, and Asn-242. Lys-177 (proton acceptor) is an active-site residue. Arg-241 provides a ligand contact to NADPH. Residues Val-265 and Glu-267 each contribute to the NADPH site.

This sequence belongs to the NAD-dependent glycerol-3-phosphate dehydrogenase family.

The protein localises to the cytoplasm. The catalysed reaction is sn-glycerol 3-phosphate + NAD(+) = dihydroxyacetone phosphate + NADH + H(+). It carries out the reaction sn-glycerol 3-phosphate + NADP(+) = dihydroxyacetone phosphate + NADPH + H(+). Its pathway is membrane lipid metabolism; glycerophospholipid metabolism. Functionally, catalyzes the reduction of the glycolytic intermediate dihydroxyacetone phosphate (DHAP) to sn-glycerol 3-phosphate (G3P), the key precursor for phospholipid synthesis. The polypeptide is Glycerol-3-phosphate dehydrogenase [NAD(P)+] (Helicobacter pylori (strain HPAG1)).